Here is a 259-residue protein sequence, read N- to C-terminus: Phosphatidylglycerol--prolipoprotein diacylglyceryl transferase (259 aa).

Helical transmembrane passes span 9–29, 55–75, 92–112, and 117–137; these read IIFSIGPFSISWYSLSYVVGI, FITYAIIGIIVGGRLGYVLLY, EGGMSFHGATIGIIISAYLFC, and INFLSLTDIITTVVPIGLFLG. An a 1,2-diacyl-sn-glycero-3-phospho-(1'-sn-glycerol)-binding site is contributed by R138. 3 helical membrane passes run 172 to 192, 201 to 221, and 228 to 248; these read QLYEAFFEGLILFCILAYAVF, GLNSGIYLIFYSLFRIIIEMF, and IGFILDSLTMGQILSAPMLLL.

The protein belongs to the Lgt family.

It is found in the cell inner membrane. It carries out the reaction L-cysteinyl-[prolipoprotein] + a 1,2-diacyl-sn-glycero-3-phospho-(1'-sn-glycerol) = an S-1,2-diacyl-sn-glyceryl-L-cysteinyl-[prolipoprotein] + sn-glycerol 1-phosphate + H(+). It participates in protein modification; lipoprotein biosynthesis (diacylglyceryl transfer). Catalyzes the transfer of the diacylglyceryl group from phosphatidylglycerol to the sulfhydryl group of the N-terminal cysteine of a prolipoprotein, the first step in the formation of mature lipoproteins. In Rickettsia typhi (strain ATCC VR-144 / Wilmington), this protein is Phosphatidylglycerol--prolipoprotein diacylglyceryl transferase.